Consider the following 145-residue polypeptide: Protein FAM216B (145 aa).

The disordered stretch occupies residues 92–121 (TKRASAKAGPHRTVPQRAAGRTRTQPSARP).

Belongs to the FAM216 family.

The protein is Protein FAM216B (FAM216B) of Bos taurus (Bovine).